A 586-amino-acid polypeptide reads, in one-letter code: Mitochondrial tRNA methylthiotransferase CDK5RAP1 (586 aa).

Residues M1–A30 constitute a mitochondrion transit peptide. A disordered region spans residues A68 to D90. One can recognise an MTTase N-terminal domain in the interval R97 to S217. Residues C106, C142, C180, C255, C259, and C262 each contribute to the [4Fe-4S] cluster site. Positions S241–K495 constitute a Radical SAM core domain. Residues A498 to C573 form the TRAM domain.

It belongs to the methylthiotransferase family. MiaB subfamily. As to quaternary structure, interacts with CDK5R1 (p35 form). CDK5RAP1, CDK5RAP2 and CDK5RAP3 show competitive binding to CDK5R1. Forms a complex with CDK5R1 and CDK5. It depends on [4Fe-4S] cluster as a cofactor. Expressed in brain.

The protein localises to the mitochondrion inner membrane. It carries out the reaction N(6)-dimethylallyladenosine(37) in tRNA + (sulfur carrier)-SH + AH2 + 2 S-adenosyl-L-methionine = 2-methylsulfanyl-N(6)-dimethylallyladenosine(37) in tRNA + (sulfur carrier)-H + 5'-deoxyadenosine + L-methionine + A + S-adenosyl-L-homocysteine + 2 H(+). In terms of biological role, methylthiotransferase that catalyzes the conversion of N6-(dimethylallyl)adenosine (i(6)A) to 2-methylthio-N6-(dimethylallyl)adenosine (ms(2)i(6)A) at position 37 (adjacent to the 3'-end of the anticodon) of four mitochondrial DNA-encoded tRNAs (Ser(UCN), Phe, Tyr and Trp). Essential for efficient and highly accurate protein translation by the ribosome. Specifically inhibits CDK5 activation by CDK5R1. Essential for efficient mitochondrial protein synthesis and respiratory chain. The polypeptide is Mitochondrial tRNA methylthiotransferase CDK5RAP1 (Cdk5rap1) (Rattus norvegicus (Rat)).